The following is a 420-amino-acid chain: Lactosylceramide alpha-2,3-sialyltransferase (420 aa).

Residues 1 to 39 (MRKKAAGGAERRPLKPRTEAAAAAPAGRAMPSDHSRMKL) are disordered. Topologically, residues 1-67 (MRKKAAGGAE…MRRPNLLLKD (67 aa)) are cytoplasmic. Residues 9-18 (AERRPLKPRT) show a composition bias toward basic and acidic residues. The segment covering 20–29 (AAAAAPAGRA) has biased composition (low complexity). Residues 68–88 (ILKCTLLLFGVWILFYILKLN) traverse the membrane as a helical segment. Topologically, residues 89–420 (HTTEECDMKR…DLSGGIHSEF (332 aa)) are lumenal. An intrachain disulfide couples C197 to C355. N238 is a glycosylation site (N-linked (GlcNAc...) asparagine).

Belongs to the glycosyltransferase 29 family.

It localises to the golgi apparatus membrane. It catalyses the reaction a beta-D-Gal-(1-&gt;4)-beta-D-Glc-(1&lt;-&gt;1)-Cer(d18:1(4E)) + CMP-N-acetyl-beta-neuraminate = a ganglioside GM3 (d18:1(4E)) + CMP + H(+). It carries out the reaction ganglioside GA2 (d18:1(4E)/18:0) + CMP-N-acetyl-beta-neuraminate = ganglioside GM2 (d18:1(4E)/18:0) + CMP + H(+). The enzyme catalyses a beta-D-Gal-(1&lt;-&gt;1')-ceramide + CMP-N-acetyl-beta-neuraminate = N-acetyl-alpha-neuraminosyl-(2-&gt;3)-beta-D-galactosyl-(1&lt;-&gt;1')-ceramide + CMP + H(+). The catalysed reaction is ganglioside GA1 (d18:1(4E)/18:0) + CMP-N-acetyl-beta-neuraminate = ganglioside GM1 (d18:1(4E)/18:0) + CMP + H(+). Its function is as follows. Transfers the sialyl group (N-acetyl-alpha-neuraminyl or NeuAc) from CMP-NeuAc to the non-reducing terminal galactose (Gal) of glycosphingolipids forming gangliosides (important molecules involved in the regulation of multiple cellular processes, including cell proliferation and differentiation, apoptosis, embryogenesis, development, and oncogenesis). Mainly involved in the biosynthesis of ganglioside GM3 but can also use different glycolipids as substrate acceptors such as D-galactosylceramide (GalCer), asialo-GM2 (GA2) and asialo-GM1 (GA1), although less preferentially than beta-D-Gal-(1-&gt;4)-beta-D-Glc-(1&lt;-&gt;1)-Cer (LacCer). The chain is Lactosylceramide alpha-2,3-sialyltransferase (ST3GAL5) from Bos taurus (Bovine).